The following is a 67-amino-acid chain: DNA-directed RNA polymerase subunit omega (67 aa).

Belongs to the RNA polymerase subunit omega family. In terms of assembly, the RNAP catalytic core consists of 2 alpha, 1 beta, 1 beta' and 1 omega subunit. When a sigma factor is associated with the core the holoenzyme is formed, which can initiate transcription.

It carries out the reaction RNA(n) + a ribonucleoside 5'-triphosphate = RNA(n+1) + diphosphate. Functionally, promotes RNA polymerase assembly. Latches the N- and C-terminal regions of the beta' subunit thereby facilitating its interaction with the beta and alpha subunits. This is DNA-directed RNA polymerase subunit omega from Delftia acidovorans (strain DSM 14801 / SPH-1).